Here is a 237-residue protein sequence, read N- to C-terminus: Exosome complex component Rrp4 (237 aa).

One can recognise an S1 motif domain in the interval 72–144; sequence GHIVVGKVVD…LSKDPVLTIK (73 aa). The region spanning 152–211 is the KH domain; the sequence is PRGTLVEIPPQKVPRVIGRRGSMVSMIEDLLGVKLIVGQNGRIVVVGDDPQRVEIAVLAV.

Belongs to the RRP4 family. As to quaternary structure, component of the archaeal exosome complex. Forms a trimer of Rrp4 and/or Csl4 subunits. The trimer associates with a hexameric ring-like arrangement composed of 3 Rrp41-Rrp42 heterodimers.

It is found in the cytoplasm. Non-catalytic component of the exosome, which is a complex involved in RNA degradation. Increases the RNA binding and the efficiency of RNA degradation. Confers strong poly(A) specificity to the exosome. The protein is Exosome complex component Rrp4 of Thermofilum pendens (strain DSM 2475 / Hrk 5).